We begin with the raw amino-acid sequence, 1277 residues long: DNA repair protein RAD5B (1277 aa).

Positions 271 to 293 are disordered; the sequence is KLEQENDDLFSSGDSDGTSAKRR. The region spanning 674 to 871 is the Helicase ATP-binding domain; sequence PTATQMARGG…YSLLCFLHVE (198 aa). 687 to 694 contributes to the ATP binding site; it reads DAMGLGKT. Positions 822 to 825 match the DEAH box motif; it reads DEAH. An RING-type zinc finger spans residues 1040–1080; sequence CPICLESADDPVLTPCAHRMCRECLLTSWRSPSCGLCPICR. Residues 1113–1277 enclose the Helicase C-terminal domain; that stretch reads ELLKCLEKIK…RLEELKMLFR (165 aa).

The protein belongs to the SNF2/RAD54 helicase family. RAD16 subfamily.

Its subcellular location is the nucleus. Possesses intrinsic ATP-dependent nucleosome-remodeling activity. This activity may be required for DNA repair. Does not seem to be required for DNA repair and regulation of homologous recombination (HR). The protein is DNA repair protein RAD5B of Arabidopsis thaliana (Mouse-ear cress).